Here is a 131-residue protein sequence, read N- to C-terminus: Small ribosomal subunit protein bS6 (131 aa).

The disordered stretch occupies residues 98–131; sequence EASPMVKAKDERRERREDFANETADDSEAGDSEE. A compositionally biased stretch (basic and acidic residues) spans 104–116; sequence KAKDERRERREDF. Residues 120-131 are compositionally biased toward acidic residues; that stretch reads TADDSEAGDSEE.

It belongs to the bacterial ribosomal protein bS6 family.

Its function is as follows. Binds together with bS18 to 16S ribosomal RNA. This Klebsiella pneumoniae subsp. pneumoniae (strain ATCC 700721 / MGH 78578) protein is Small ribosomal subunit protein bS6.